A 541-amino-acid chain; its full sequence is Chaperonin GroEL 2 (541 aa).

ATP is bound by residues 29–32 (TLGP) and 86–90 (DGTTT). K132 is covalently cross-linked (Isoglutamyl lysine isopeptide (Lys-Gln) (interchain with Q-Cter in protein Pup)). ATP-binding positions include G413, 476 to 478 (NAA), and D492.

This sequence belongs to the chaperonin (HSP60) family. As to quaternary structure, forms a cylinder of 14 subunits composed of two heptameric rings stacked back-to-back. Interacts with the co-chaperonin GroES.

The protein localises to the secreted. It localises to the capsule. The protein resides in the cell surface. Its subcellular location is the cell wall. The enzyme catalyses ATP + H2O + a folded polypeptide = ADP + phosphate + an unfolded polypeptide.. In terms of biological role, together with its co-chaperonin GroES, plays an essential role in assisting protein folding. The GroEL-GroES system forms a nano-cage that allows encapsulation of the non-native substrate proteins and provides a physical environment optimized to promote and accelerate protein folding. The chain is Chaperonin GroEL 2 from Mycolicibacterium smegmatis (strain ATCC 700084 / mc(2)155) (Mycobacterium smegmatis).